Here is a 159-residue protein sequence, read N- to C-terminus: Neurotrophin-3 (159 aa).

Positions 1-3 are cleaved as a signal peptide; the sequence is IQS. Residues 4–115 constitute a propeptide that is removed on maturation; the sequence is TSMDQGILTE…VQNRTSRRKR (112 aa). The disordered stretch occupies residues 91-129; that stretch reads APLEPPPLYLTEEPLVQNRTSRRKREGKRHRGEYSVCDS. The N-linked (GlcNAc...) asparagine glycan is linked to Asn108. The span at 110 to 121 shows a compositional bias: basic residues; that stretch reads TSRRKREGKRHR.

The protein belongs to the NGF-beta family.

Its subcellular location is the secreted. Functionally, seems to promote the survival of visceral and proprioceptive sensory neurons. In Candoia carinata (Papuan tree boa), this protein is Neurotrophin-3 (NTF3).